A 145-amino-acid polypeptide reads, in one-letter code: 3-hydroxyacyl-[acyl-carrier-protein] dehydratase FabZ (145 aa).

H47 is an active-site residue.

This sequence belongs to the thioester dehydratase family. FabZ subfamily.

It is found in the cytoplasm. The catalysed reaction is a (3R)-hydroxyacyl-[ACP] = a (2E)-enoyl-[ACP] + H2O. Functionally, involved in unsaturated fatty acids biosynthesis. Catalyzes the dehydration of short chain beta-hydroxyacyl-ACPs and long chain saturated and unsaturated beta-hydroxyacyl-ACPs. This is 3-hydroxyacyl-[acyl-carrier-protein] dehydratase FabZ from Polaromonas naphthalenivorans (strain CJ2).